The primary structure comprises 112 residues: uncharacterized protein (112 aa).

A run of 2 helical transmembrane segments spans residues 55–75 (LLEI…PTLF) and 91–111 (LIML…LLLL).

Its subcellular location is the membrane. This is an uncharacterized protein from Saccharomyces cerevisiae (strain ATCC 204508 / S288c) (Baker's yeast).